Here is a 406-residue protein sequence, read N- to C-terminus: MNLSLKVLDKRGFLKQCTNLEELSTLMDREKIVFYVGVDATSASLHIGHLIPFMVMLHLQRQGHIPIILIGGGTTKIGDPSGKDSMRKILLKEDIDENVKTISSQLLKIIDLSNGGYILNNAEWLDGINYIEFLREVGIYFSVNRMLSFETYKRRLKDGLSFIEFNYQLLQSYDFYMLSRMKNCKLQIGGDDQWGNIVSGVDLVNRKSGNKVFGLTLPLITRSDGNKMGKSEKGAVYLDSELYSVYDFYQYFRNIPDLDVKKFLYLFTFLEEEEIERIASVKGQLLNNAKEILAFEITKIVHGKDEALKASSAAKAAFKGGDGRADIPFFKLELTNLEESILLVDLMVLAKVVSSKSEARRLIDSGGVYIDKVRVGDQNYCLCKDNFINGEIELKIGKKKILRIVL.

Y35 contacts L-tyrosine. A 'HIGH' region motif is present at residues 40–49; the sequence is ATSASLHIGH. 2 residues coordinate L-tyrosine: Y167 and Q171. The 'KMSKS' region signature appears at 227 to 231; sequence KMGKS. K230 serves as a coordination point for ATP. The 65-residue stretch at 341-405 folds into the S4 RNA-binding domain; that stretch reads ILLVDLMVLA…IGKKKILRIV (65 aa).

Belongs to the class-I aminoacyl-tRNA synthetase family. TyrS type 1 subfamily. As to quaternary structure, homodimer.

It localises to the cytoplasm. It catalyses the reaction tRNA(Tyr) + L-tyrosine + ATP = L-tyrosyl-tRNA(Tyr) + AMP + diphosphate + H(+). Functionally, catalyzes the attachment of tyrosine to tRNA(Tyr) in a two-step reaction: tyrosine is first activated by ATP to form Tyr-AMP and then transferred to the acceptor end of tRNA(Tyr). In Borrelia recurrentis (strain A1), this protein is Tyrosine--tRNA ligase.